The primary structure comprises 97 residues: Exodeoxyribonuclease 7 small subunit (97 aa).

Positions 1-22 are disordered; it reads MAKTASPGATPPGNGTEPLPDN.

The protein belongs to the XseB family. In terms of assembly, heterooligomer composed of large and small subunits.

It is found in the cytoplasm. It carries out the reaction Exonucleolytic cleavage in either 5'- to 3'- or 3'- to 5'-direction to yield nucleoside 5'-phosphates.. Its function is as follows. Bidirectionally degrades single-stranded DNA into large acid-insoluble oligonucleotides, which are then degraded further into small acid-soluble oligonucleotides. The protein is Exodeoxyribonuclease 7 small subunit of Burkholderia lata (strain ATCC 17760 / DSM 23089 / LMG 22485 / NCIMB 9086 / R18194 / 383).